Consider the following 761-residue polypeptide: Protein spire homolog 1 (761 aa).

Disordered stretches follow at residues 1-23 (MTDG…ARPE) and 160-183 (DCPD…AEVS). Positions 36–223 (LCLEEILTLY…RALYAETKEL (188 aa)) constitute a KIND domain. Over residues 160 to 180 (DCPDEGYEATEEEDEGEEENA) the composition is skewed to acidic residues. Residues 218 to 246 (AETKELRTFLEKIKSAKENLRKMEGETEE) are a coiled coil. 2 WH2 domains span residues 295-313 (PYEM…LRKV) and 359-376 (LHER…LRPV). Disordered regions lie at residues 375–406 (PVSP…DIPD) and 419–539 (ANGT…KSLA). Residues 469–480 (SSSSISTSLVED) show a composition bias toward low complexity. The segment covering 504-520 (PDKRIAPQRRHSIEKEA) has biased composition (basic and acidic residues). The segment at 557 to 577 (LTLTVEEVMHIRQVLVKAELE) is spir-box. 2 disordered regions span residues 630–694 (PSKP…DELE) and 728–761 (STKR…IKEV). Residues 636 to 647 (SLPISSLGPSIL) show a composition bias toward low complexity. Residues 682–693 (KHGDRSSSKDEL) show a composition bias toward basic and acidic residues. The segment covering 728 to 739 (STKRARLHRRTH) has biased composition (basic residues). Positions 740 to 749 (SVYSSSTSSS) are enriched in low complexity.

This sequence belongs to the spire family.

The protein localises to the cytoplasm. It is found in the cytoskeleton. It localises to the cytosol. Its subcellular location is the cleavage furrow. The protein resides in the perinuclear region. The protein localises to the cell membrane. It is found in the cytoplasmic vesicle membrane. Its function is as follows. Acts as an actin nucleation factor, remains associated with the slow-growing pointed end of the new filament. Involved in intracellular vesicle transport along actin fibers, providing a novel link between actin cytoskeleton dynamics and intracellular transport. Required for asymmetric spindle positioning and asymmetric cell division during meiosis. Required for normal formation of the cleavage furrow and for polar body extrusion during female germ cell meiosis. Also acts in the nucleus: together with FMN2, promotes assembly of nuclear actin filaments in response to DNA damage in order to facilitate movement of chromatin and repair factors after DNA damage. In addition, promotes innate immune signaling downstream of dsRNA sensing. Mechanistically, contributes to IRF3 phosphorylation and activation downstream of MAVS and upstream of TBK1. The sequence is that of Protein spire homolog 1 from Danio rerio (Zebrafish).